We begin with the raw amino-acid sequence, 340 residues long: N-acetyl-gamma-glutamyl-phosphate reductase (340 aa).

Cysteine 148 is an active-site residue.

The protein belongs to the NAGSA dehydrogenase family. Type 1 subfamily.

The protein localises to the cytoplasm. The enzyme catalyses N-acetyl-L-glutamate 5-semialdehyde + phosphate + NADP(+) = N-acetyl-L-glutamyl 5-phosphate + NADPH + H(+). Its pathway is amino-acid biosynthesis; L-arginine biosynthesis; N(2)-acetyl-L-ornithine from L-glutamate: step 3/4. Catalyzes the NADPH-dependent reduction of N-acetyl-5-glutamyl phosphate to yield N-acetyl-L-glutamate 5-semialdehyde. In Methanosarcina mazei (strain ATCC BAA-159 / DSM 3647 / Goe1 / Go1 / JCM 11833 / OCM 88) (Methanosarcina frisia), this protein is N-acetyl-gamma-glutamyl-phosphate reductase.